A 397-amino-acid chain; its full sequence is Elongation factor Tu (397 aa).

In terms of domain architecture, tr-type G spans 10–207 (KPHVNVGTIG…TLDAYIPEPE (198 aa)). The tract at residues 19 to 26 (GHVDHGKT) is G1. A GTP-binding site is contributed by 19–26 (GHVDHGKT). Position 26 (Thr-26) interacts with Mg(2+). The segment at 60 to 64 (GITIA) is G2. Residues 81-84 (DCPG) form a G3 region. Residues 81 to 85 (DCPGH) and 136 to 139 (NKAD) contribute to the GTP site. A G4 region spans residues 136–139 (NKAD). The interval 174-176 (SAL) is G5.

This sequence belongs to the TRAFAC class translation factor GTPase superfamily. Classic translation factor GTPase family. EF-Tu/EF-1A subfamily. In terms of assembly, monomer.

The protein localises to the cytoplasm. It carries out the reaction GTP + H2O = GDP + phosphate + H(+). In terms of biological role, GTP hydrolase that promotes the GTP-dependent binding of aminoacyl-tRNA to the A-site of ribosomes during protein biosynthesis. The protein is Elongation factor Tu of Hahella chejuensis (strain KCTC 2396).